The sequence spans 565 residues: DNA mismatch repair protein MutL (565 aa).

The protein belongs to the DNA mismatch repair MutL/HexB family.

This protein is involved in the repair of mismatches in DNA. It is required for dam-dependent methyl-directed DNA mismatch repair. May act as a 'molecular matchmaker', a protein that promotes the formation of a stable complex between two or more DNA-binding proteins in an ATP-dependent manner without itself being part of a final effector complex. This chain is DNA mismatch repair protein MutL, found in Desulforudis audaxviator (strain MP104C).